The chain runs to 440 residues: Enolase 1-2 (440 aa).

Substrate contacts are provided by H160 and E169. E212 (proton donor) is an active-site residue. Mg(2+)-binding residues include D247, E296, and D321. Residues E296 and D321 each coordinate substrate. K346 acts as the Proton acceptor in catalysis. Residues 373-376 (SHRS) and K397 contribute to the substrate site.

Belongs to the enolase family. Homodimer. It depends on Mg(2+) as a cofactor.

It is found in the cytoplasm. It catalyses the reaction (2R)-2-phosphoglycerate = phosphoenolpyruvate + H2O. It functions in the pathway carbohydrate degradation; glycolysis; pyruvate from D-glyceraldehyde 3-phosphate: step 4/5. This Schizosaccharomyces pombe (strain 972 / ATCC 24843) (Fission yeast) protein is Enolase 1-2 (eno102).